The sequence spans 522 residues: Penicillin-sensitive carboxypeptidase A (522 aa).

Serine 94 (acyl-ester intermediate) is an active-site residue. Lysine 97 serves as the catalytic Proton acceptor. Serine 351 is a catalytic residue. Substrate is bound at residue lysine 461.

This sequence belongs to the peptidase S13 family.

The catalysed reaction is Preferential cleavage: (Ac)2-L-Lys-D-Ala-|-D-Ala. Also transpeptidation of peptidyl-alanyl moieties that are N-acyl substituents of D-alanine.. Its activity is regulated as follows. Inhibited by penicillin G. Functionally, carboxypeptidase. The polypeptide is Penicillin-sensitive carboxypeptidase A (pscA) (Dictyostelium discoideum (Social amoeba)).